The sequence spans 240 residues: LexA repressor (240 aa).

Residues 26 to 46 (FDEMKEALDLASKSGIHRLIT) constitute a DNA-binding region (H-T-H motif). Catalysis depends on for autocatalytic cleavage activity residues S161 and K199.

It belongs to the peptidase S24 family. As to quaternary structure, homodimer.

It catalyses the reaction Hydrolysis of Ala-|-Gly bond in repressor LexA.. Functionally, represses a number of genes involved in the response to DNA damage (SOS response), including recA and lexA. In the presence of single-stranded DNA, RecA interacts with LexA causing an autocatalytic cleavage which disrupts the DNA-binding part of LexA, leading to derepression of the SOS regulon and eventually DNA repair. The sequence is that of LexA repressor from Brucella ovis (strain ATCC 25840 / 63/290 / NCTC 10512).